Reading from the N-terminus, the 440-residue chain is Probable pectate lyase 10 (440 aa).

The first 28 residues, methionine 1–alanine 28, serve as a signal peptide directing secretion. The tract at residues glutamate 32–asparagine 56 is disordered. N-linked (GlcNAc...) asparagine glycans are attached at residues asparagine 41 and asparagine 76. Ca(2+)-binding residues include aspartate 238, aspartate 262, and aspartate 266. Arginine 318 is a catalytic residue.

The protein belongs to the polysaccharide lyase 1 family. Ca(2+) serves as cofactor.

It catalyses the reaction Eliminative cleavage of (1-&gt;4)-alpha-D-galacturonan to give oligosaccharides with 4-deoxy-alpha-D-galact-4-enuronosyl groups at their non-reducing ends.. It participates in glycan metabolism; pectin degradation; 2-dehydro-3-deoxy-D-gluconate from pectin: step 2/5. The protein is Probable pectate lyase 10 of Arabidopsis thaliana (Mouse-ear cress).